Reading from the N-terminus, the 402-residue chain is MADKILRAKRKQFINSVSIGTINGLLDELLEKRVLNQEEMDKIKLANITAMDKARDLCDHVSKKGPQASQIFITYICNEDCYLAGILELQSAPSAETFVATEDSKGGHPSSSETKEEQNKEDGTFPGLTGTLKFCPLEKAQKLWKENPSEIYPIMNTTTRTRLALIICNTEFQHLSPRVGAQVDLREMKLLLEDLGYTVKVKENLTALEMVKEVKEFAACPEHKTSDSTFLVFMSHGIQEGICGTTYSNEVSDILKVDTIFQMMNTLKCPSLKDKPKVIIIQACRGEKQGVVLLKDSVRDSEEDFLTDAIFEDDGIKKAHIEKDFIAFCSSTPDNVSWRHPVRGSLFIESLIKHMKEYAWSCDLEDIFRKVRFSFEQPEFRLQMPTADRVTLTKRFYLFPGH.

One can recognise a CARD domain in the interval M1 to S91. A propeptide spanning residues M1–Q118 is cleaved from the precursor. The tract at residues F98–F125 is disordered. Positions E113–G123 are enriched in basic and acidic residues. Catalysis depends on residues H236 and C284. The propeptide occupies S297–D314. Residue S301 is modified to Phosphoserine. R343 is modified (omega-N-methylarginine).

It belongs to the peptidase C14A family. In terms of assembly, heterotetramer that consists of two anti-parallel arranged heterodimers, each one formed by a 20 kDa (Caspase-1 subunit p20) and a 10 kDa (Caspase-1 subunit p10) subunit. May be a component of the inflammasome, a protein complex which also includes PYCARD, CARD8 and NLRP2 and whose function would be the activation of pro-inflammatory caspases. Component of the AIM2 PANoptosome complex, a multiprotein complex that drives inflammatory cell death (PANoptosis). Both the p10 and p20 subunits interact with MEFV. Interacts with CARD17P/INCA and CARD18. Interacts with SERPINB1; this interaction regulates CASP1 activity. Heterotetramer that consists of two anti-parallel arranged heterodimers, each one formed by a 20 kDa (Caspase-1 subunit p20) and a 10 kDa (Caspase-1 subunit p10) subunit. The two subunits are derived from the precursor sequence by an autocatalytic mechanism. Post-translationally, ubiquitinated via 'Lys-11'-linked polyubiquitination. Deubiquitinated by USP8. In terms of tissue distribution, high level expression seen in spleen and lung, low level expression seen in brain, heart, liver, kidney, testis and skeletal muscle.

The protein resides in the cytoplasm. Its subcellular location is the cell membrane. The enzyme catalyses Strict requirement for an Asp residue at position P1 and has a preferred cleavage sequence of Tyr-Val-Ala-Asp-|-.. In terms of biological role, thiol protease involved in a variety of inflammatory processes by proteolytically cleaving other proteins, such as the precursors of the inflammatory cytokines interleukin-1 beta (IL1B) and interleukin 18 (IL18) as well as the pyroptosis inducer Gasdermin-D (GSDMD), into active mature peptides. Plays a key role in cell immunity as an inflammatory response initiator: once activated through formation of an inflammasome complex, it initiates a pro-inflammatory response through the cleavage of the two inflammatory cytokines IL1B and IL18, releasing the mature cytokines which are involved in a variety of inflammatory processes. Cleaves a tetrapeptide after an Asp residue at position P1. Also initiates pyroptosis, a programmed lytic cell death pathway, through cleavage of GSDMD. In contrast to cleavage of interleukin IL1B, recognition and cleavage of GSDMD is not strictly dependent on the consensus cleavage site but depends on an exosite interface on CASP1 that recognizes and binds the Gasdermin-D, C-terminal (GSDMD-CT) part. Cleaves and activates CASP7 in response to bacterial infection, promoting plasma membrane repair. Upon inflammasome activation, during DNA virus infection but not RNA virus challenge, controls antiviral immunity through the cleavage of CGAS, rendering it inactive. In apoptotic cells, cleaves SPHK2 which is released from cells and remains enzymatically active extracellularly. The chain is Caspase-1 (Casp1) from Mus musculus (Mouse).